The following is a 378-amino-acid chain: Sterol 24-C-methyltransferase erg6 (378 aa).

This sequence belongs to the class I-like SAM-binding methyltransferase superfamily. Erg6/SMT family.

Its subcellular location is the nucleus. It is found in the endoplasmic reticulum. It carries out the reaction zymosterol + S-adenosyl-L-methionine = fecosterol + S-adenosyl-L-homocysteine + H(+). It catalyses the reaction lanosterol + S-adenosyl-L-methionine = eburicol + S-adenosyl-L-homocysteine + H(+). Its pathway is steroid metabolism; ergosterol biosynthesis. Sterol 24-C-methyltransferase; part of the third module of ergosterol biosynthesis pathway that includes by the late steps of the pathway. Erg6 catalyzes the methyl transfer from S-adenosyl-methionine to the C-24 of zymosterol to form fecosterol. The third module or late pathway involves the ergosterol synthesis itself through consecutive reactions that mainly occur in the endoplasmic reticulum (ER) membrane. Firstly, the squalene synthase erg9 catalyzes the condensation of 2 farnesyl pyrophosphate moieties to form squalene, which is the precursor of all steroids. Secondly, squalene is converted into lanosterol by the consecutive action of the squalene epoxidase erg1 and the lanosterol synthase erg7. The lanosterol 14-alpha-demethylase erg11/cyp1 catalyzes C14-demethylation of lanosterol to produce 4,4'-dimethyl cholesta-8,14,24-triene-3-beta-ol. In the next steps, a complex process involving various demethylation, reduction and desaturation reactions catalyzed by the C-14 reductase erg24 and the C-4 demethylation complex erg25-erg26-erg27 leads to the production of zymosterol. Erg28 likely functions in the C-4 demethylation complex reaction by tethering erg26 and Erg27 to the endoplasmic reticulum or to facilitate interaction between these proteins. Then, the sterol 24-C-methyltransferase erg6 catalyzes the methyl transfer from S-adenosyl-methionine to the C-24 of zymosterol to form fecosterol. The C-8 sterol isomerase erg2 catalyzes the reaction which results in unsaturation at C-7 in the B ring of sterols and thus converts fecosterol to episterol. The sterol-C5-desaturases erg31 and erg32 then catalyze the introduction of a C-5 double bond in the B ring to produce 5-dehydroepisterol. The C-22 sterol desaturase erg5 further converts 5-dehydroepisterol into ergosta-5,7,22,24(28)-tetraen-3beta-ol by forming the C-22(23) double bond in the sterol side chain. Finally, ergosta-5,7,22,24(28)-tetraen-3beta-ol is substrate of the C-24(28) sterol reductase erg4 to produce ergosterol. In the genus Schizosaccharomyces, a second route exists between lanosterol and fecosterol, via the methylation of lanosterol to eburicol by erg6, followed by C14-demethylation by erg11/cyp1 and C4-demethylation by the demethylation complex erg25-erg26-erg27. In Schizosaccharomyces pombe (strain 972 / ATCC 24843) (Fission yeast), this protein is Sterol 24-C-methyltransferase erg6.